Reading from the N-terminus, the 334-residue chain is Probable fructose-bisphosphate aldolase class 1 (334 aa).

This sequence belongs to the class I fructose-bisphosphate aldolase family.

The catalysed reaction is beta-D-fructose 1,6-bisphosphate = D-glyceraldehyde 3-phosphate + dihydroxyacetone phosphate. The protein operates within carbohydrate degradation; glycolysis; D-glyceraldehyde 3-phosphate and glycerone phosphate from D-glucose: step 4/4. In Xanthomonas axonopodis pv. citri (strain 306), this protein is Probable fructose-bisphosphate aldolase class 1.